Reading from the N-terminus, the 547-residue chain is Elongator complex protein 3 (547 aa).

The Radical SAM core domain maps to 82–372; that stretch reads RTASGIAVVA…YRVQRDIPMP (291 aa). Residues Cys-99, Cys-109, and Cys-112 each contribute to the [4Fe-4S] cluster site. The residue at position 161 (Ser-161) is a Phosphoserine. Acetyl-CoA is bound at residue Lys-164. Lys-229 bears the N6-methyllysine mark. Tyr-251 is subject to Phosphotyrosine. An N-acetyltransferase domain is found at 396 to 547; that stretch reads IQCRDVRTRE…QGPYMVKMLK (152 aa). Acetyl-CoA-binding positions include 474 to 477, 497 to 499, and Tyr-530; these read ELHV and FGM.

Belongs to the ELP3 family. As to quaternary structure, component of the elongator complex which consists of ELP1, ELP2, ELP3, ELP4, ELP5 and ELP6. ELP1, ELP2 and ELP3 form the elongator core complex. Interacts with alpha-tubulin. It depends on [4Fe-4S] cluster as a cofactor. In terms of processing, tyrosine-phosphorylated. Also serine/threonine-phosphorylated.

Its subcellular location is the cytoplasm. It is found in the nucleus. The catalysed reaction is uridine(34) in tRNA + acetyl-CoA + S-adenosyl-L-methionine + H2O = 5-(carboxymethyl)uridine(34) in tRNA + 5'-deoxyadenosine + L-methionine + CoA + 2 H(+). It participates in tRNA modification; 5-methoxycarbonylmethyl-2-thiouridine-tRNA biosynthesis. Catalytic tRNA acetyltransferase subunit of the elongator complex which is required for multiple tRNA modifications, including mcm5U (5-methoxycarbonylmethyl uridine), mcm5s2U (5-methoxycarbonylmethyl-2-thiouridine), and ncm5U (5-carbamoylmethyl uridine). In the elongator complex, acts as a tRNA uridine(34) acetyltransferase by mediating formation of carboxymethyluridine in the wobble base at position 34 in tRNAs. May also act as a protein lysine acetyltransferase by mediating acetylation of target proteins; such activity is however unclear in vivo and recent evidences suggest that ELP3 primarily acts as a tRNA acetyltransferase. Involved in neurogenesis: regulates the migration and branching of projection neurons in the developing cerebral cortex, through a process depending on alpha-tubulin acetylation. Required for acetylation of GJA1 in the developing cerebral cortex. The chain is Elongator complex protein 3 from Mus musculus (Mouse).